The primary structure comprises 221 residues: uncharacterized protein (221 aa).

Residues 1–26 (MVRLVPRAFAATVALLAAGFSPATAS) form the signal peptide.

This is an uncharacterized protein from Mycobacterium tuberculosis (strain CDC 1551 / Oshkosh).